Here is a 133-residue protein sequence, read N- to C-terminus: Inhibitor of g-type lysozyme (133 aa).

The first 22 residues, 1–22 (MKIKSIRKAVLLLALLTSTSFA), serve as a signal peptide directing secretion.

Its subcellular location is the periplasm. Inhibits activity of g-type lysozyme, which confers increased lysozyme tolerance to the bacterium. The chain is Inhibitor of g-type lysozyme (pliG) from Escherichia coli (strain K12).